A 212-amino-acid chain; its full sequence is HTH-type transcriptional regulatory protein RaaS (212 aa).

The HTH tetR-type domain maps to 6–65 (LTAHARIREAAIEQFGRHGFGVGLRAIAEAAGVSAALVIHHFGSKEGLRKACDDFVAEEI). A DNA-binding region (H-T-H motif) is located at residues 28-47 (GLRAIAEAAGVSAALVIHHF).

As to quaternary structure, homodimer. Interacts with long chain acyl-CoA derivatives. Interacts with several drugs such rhodamine 6G, ethidium and safranin O.

Its activity is regulated as follows. Interaction with long chain acyl-CoA derivatives (oleoyl-CoA and, to lesser extent, stearoyl-CoA) prevents binding to DNA, leading to the expression of the target genes. Long chain acyl-CoA derivatives may serve as biological indicators of the bacterial metabolic state. Regulates the expression of the Rv1217c-Rv1218c multidrug efflux system and its own expression. Acts by binding to promoter regions of Rv1219c and upstream of the Rv1218c gene. Important for survival in prolonged stationary phase and during macrophage infection. May be used to eliminate non-growing mycobacteria. The chain is HTH-type transcriptional regulatory protein RaaS from Mycobacterium tuberculosis (strain ATCC 25618 / H37Rv).